The sequence spans 339 residues: MSYSAPSQITQRQLAYFEGKHVLIAGELIDDFPFELAKHCESTSIFTTNYSYYKQFAGHNSIQCYFGSELTEPTNVDMILLYWPKAKAEAEYLLTMLLAKLGKNTEIVVVGENRSGVKSIEKMFADFGPINKFDSARRCSFYWGQCTEEAPTFNQQDWFKEYQVEFENHTIEVRSLPGVFSHGEFDKGSELLLQTLPALRGHVLDFGCGAGVIGSVMKTINPKIHLDMVDISALAIASSIETLKANNLEGNVFASDVYSDTKENYQFIVSNPPFHAGLKTHYSSTEELLEKAPQNLTHEGQLILVANSFLQYPPIIEKAFGECLTLAKNNKFKIYSAQK.

It belongs to the methyltransferase superfamily. RsmC family. As to quaternary structure, monomer.

It is found in the cytoplasm. It catalyses the reaction guanosine(1207) in 16S rRNA + S-adenosyl-L-methionine = N(2)-methylguanosine(1207) in 16S rRNA + S-adenosyl-L-homocysteine + H(+). Specifically methylates the guanine in position 1207 of 16S rRNA in the 30S particle. The protein is Ribosomal RNA small subunit methyltransferase C of Aliivibrio fischeri (strain ATCC 700601 / ES114) (Vibrio fischeri).